The chain runs to 544 residues: Putative glycerol-3-phosphate transporter 4 (544 aa).

The next 6 membrane-spanning stretches (helical) occupy residues 28-47 (TFRY…YHAS), 121-141 (VAFL…GDSL), 156-176 (FFVG…WFFL), 181-201 (AAGL…GNWF), 218-238 (SVGN…GWGW), and 240-260 (FIAP…FLAA). The disordered stretch occupies residues 281–313 (KRDVEEEEEEVEEDLGTDVEGDGEGSSGSGSGY). Residues 285-303 (EEEEEEVEEDLGTDVEGDG) are compositionally biased toward acidic residues. The next 7 helical transmembrane spans lie at 319 to 339 (VGLL…CLFF), 342 to 362 (LVAY…TIGG), 371 to 391 (GNLS…CGYI), 402 to 422 (AAAF…YGGV), 428 to 448 (ILLM…ITTA), 471 to 491 (AIID…TGFL), and 494 to 514 (LGWQ…GLLL).

The protein belongs to the major facilitator superfamily. Organophosphate:Pi antiporter (OPA) (TC 2.A.1.4) family.

The protein resides in the membrane. In Arabidopsis thaliana (Mouse-ear cress), this protein is Putative glycerol-3-phosphate transporter 4.